The sequence spans 736 residues: Dynamin-1-like protein (736 aa).

Position 1 is an N-acetylmethionine (Met1). Positions 22–302 (IIQLPQIVVV…LMHHIRDCLP (281 aa)) constitute a Dynamin-type G domain. The G1 motif stretch occupies residues 32–39 (GTQSSGKS). Residue 32-40 (GTQSSGKSS) participates in GTP binding. The tract at residues 58–60 (VTR) is G2 motif. Residues 146–149 (DLPG) are G3 motif. Residues 215–218 (TKLD) are G4 motif. Residues 215 to 221 (TKLDLMD) and 246 to 249 (NRSQ) each bind GTP. The G5 motif stretch occupies residues 245 to 248 (VNRS). The interval 344 to 489 (YCNTIEGTAK…NEMVHNLVAI (146 aa)) is middle domain. The interaction with GSK3B stretch occupies residues 448-685 (NYSTQELLRF…NHVKDTLQSE (238 aa)). Residues 502–569 (ADACGLMNNN…IQDSRRETKN (68 aa)) form a b domain region. A disordered region spans residues 523–590 (ELPSAVSRDK…VQEPTTGNWR (68 aa)). Ser529 carries the phosphoserine modification. Glycyl lysine isopeptide (Lys-Gly) (interchain with G-Cter in SUMO) cross-links involve residues Lys532 and Lys535. A compositionally biased stretch (low complexity) spans 537–554 (PSALAPASQEPSPAASAE). The residue at position 548 (Ser548) is a Phosphoserine. Residues 555 to 568 (ADGKLIQDSRRETK) show a composition bias toward basic and acidic residues. Glycyl lysine isopeptide (Lys-Gly) (interchain with G-Cter in SUMO) cross-links involve residues Lys558 and Lys568. O-linked (GlcNAc) threonine glycans are attached at residues Thr585 and Thr586. Lys594 is covalently cross-linked (Glycyl lysine isopeptide (Lys-Gly) (interchain with G-Cter in SUMO)). The residue at position 597 (Lys597) is an N6-acetyllysine; alternate. A Glycyl lysine isopeptide (Lys-Gly) (interchain with G-Cter in SUMO); alternate cross-link involves residue Lys597. Lys606 is covalently cross-linked (Glycyl lysine isopeptide (Lys-Gly) (interchain with G-Cter in SUMO)). The residue at position 607 (Ser607) is a Phosphoserine. Lys608 participates in a covalent cross-link: Glycyl lysine isopeptide (Lys-Gly) (interchain with G-Cter in SUMO). At Ser616 the chain carries Phosphoserine; by CDK1 and PINK1. Ser637 carries the phosphoserine; by CAMK1 and PKA modification. Cys644 bears the S-nitrosocysteine mark. Residues 644–735 (CEVIERLIKS…IIAEIRETHL (92 aa)) enclose the GED domain. Residues 654-668 (YFLIVRKNIQDSVPK) are important for homodimerization.

The protein belongs to the TRAFAC class dynamin-like GTPase superfamily. Dynamin/Fzo/YdjA family. In terms of assembly, homotetramer; dimerizes through the N-terminal GTP-middle region of one molecule binding to the GED domain of another DNM1L molecule. Oligomerizes in a GTP-dependent manner to form membrane-associated tubules with a spiral pattern. Interacts with GSK3B and MARCHF5. Interacts (via the GTPase and B domains) with UBE2I; the interaction promotes sumoylation of DNM1L, mainly in its B domain. Interacts with PPP3CA; the interaction dephosphorylates DNM1L and regulates its transition to mitochondria. Interacts with BCL2L1 isoform BCL-X(L) and CLTA; DNM1L and BCL2L1 isoform BCL-X(L) may form a complex in synaptic vesicles that also contains clathrin and MFF. Interacts with MFF; the interaction is inhibited by C11orf65/MFI. Interacts with FIS1; may form part of a larger protein complex at the endoplasmic reticulum-mitochondrial interface during mitochondrial fission. Interacts with CANX. Interacts with BCAP31. Interacts with MIEF2 and MIEF1; GTP-dependent, regulates GTP hydrolysis and DNM1L oligomerization. Interacts with PGAM5; this interaction leads to dephosphorylation at Ser-656 and activation of GTPase activity and eventually to mitochondria fragmentation. Interacts with RALBP1; during mitosis, recruits DNM1L to the mitochondrion and mediates its activation by the mitotic kinase cyclin B-CDK1. Interacts with FUNDC1; this interaction recruits DNM1L/DRP1 at ER-mitochondria contact sites. Phosphorylation/dephosphorylation events on two sites near the GED domain regulate mitochondrial fission. Phosphorylation on Ser-637 by CAMK1 and PKA inhibits the GTPase activity, leading to a defect in mitochondrial fission promoting mitochondrial elongation. Dephosphorylated on this site by PPP3CA which promotes mitochondrial fission. Phosphorylation on Ser-616 by CDK1 and PINK1 activates the GTPase activity and promotes mitochondrial fission. Phosphorylated in a circadian manner at Ser-637. Dephosphorylated by PGAM5. Post-translationally, sumoylated on various lysine residues within the B domain, probably by MUL1. Sumoylation positively regulates mitochondrial fission. Desumoylated by SENP5 during G2/M transition of mitosis. Appears to be linked to its catalytic activity. In terms of processing, S-nitrosylation increases DNM1L dimerization, mitochondrial fission and causes neuronal damage. Ubiquitination by MARCHF5 affects mitochondrial morphology. Post-translationally, O-GlcNAcylation augments the level of the GTP-bound active form of DNM1L and induces translocation from the cytoplasm to mitochondria in cardiomyocytes. It also decreases phosphorylation at Ser-637. As to expression, ubiquitously expressed with highest levels found in skeletal muscles, heart, kidney and brain. Isoform 1 is brain-specific. Isoform 2 and isoform 3 are predominantly expressed in testis and skeletal muscles respectively. Isoform 4 is weakly expressed in brain, heart and kidney. Isoform 5 is dominantly expressed in liver, heart and kidney. Isoform 6 is expressed in neurons.

The protein resides in the cytoplasm. Its subcellular location is the cytosol. It is found in the golgi apparatus. It localises to the endomembrane system. The protein localises to the mitochondrion outer membrane. The protein resides in the peroxisome. Its subcellular location is the membrane. It is found in the clathrin-coated pit. It localises to the cytoplasmic vesicle. The protein localises to the secretory vesicle. The protein resides in the synaptic vesicle membrane. It carries out the reaction GTP + H2O = GDP + phosphate + H(+). GTPase activity is increased by binding to phospholipid membranes. Functionally, functions in mitochondrial and peroxisomal division. Mediates membrane fission through oligomerization into membrane-associated tubular structures that wrap around the scission site to constrict and sever the mitochondrial membrane through a GTP hydrolysis-dependent mechanism. The specific recruitment at scission sites is mediated by membrane receptors like MFF, MIEF1 and MIEF2 for mitochondrial membranes. While the recruitment by the membrane receptors is GTP-dependent, the following hydrolysis of GTP induces the dissociation from the receptors and allows DNM1L filaments to curl into closed rings that are probably sufficient to sever a double membrane. Acts downstream of PINK1 to promote mitochondrial fission in a PRKN-dependent manner. Plays an important role in mitochondrial fission during mitosis. Through its function in mitochondrial division, ensures the survival of at least some types of postmitotic neurons, including Purkinje cells, by suppressing oxidative damage. Required for normal brain development, including that of cerebellum. Facilitates developmentally regulated apoptosis during neural tube formation. Required for a normal rate of cytochrome c release and caspase activation during apoptosis; this requirement may depend upon the cell type and the physiological apoptotic cues. Required for formation of endocytic vesicles. Proposed to regulate synaptic vesicle membrane dynamics through association with BCL2L1 isoform Bcl-X(L) which stimulates its GTPase activity in synaptic vesicles; the function may require its recruitment by MFF to clathrin-containing vesicles. Required for programmed necrosis execution. Rhythmic control of its activity following phosphorylation at Ser-637 is essential for the circadian control of mitochondrial ATP production. Its function is as follows. Inhibits peroxisomal division when overexpressed. The chain is Dynamin-1-like protein from Homo sapiens (Human).